We begin with the raw amino-acid sequence, 156 residues long: Lipoprotein signal peptidase (156 aa).

4 helical membrane passes run 8–28 (IYIN…KWIL), 39–59 (VFFI…SILS), 67–87 (YFLL…MIKF), and 99–119 (SLIL…GFVI). Catalysis depends on residues Asp-120 and Asp-138. Residues 129 to 149 (WHFATFNIADFSIFIGMIMII) form a helical membrane-spanning segment.

Belongs to the peptidase A8 family.

It localises to the cell inner membrane. It carries out the reaction Release of signal peptides from bacterial membrane prolipoproteins. Hydrolyzes -Xaa-Yaa-Zaa-|-(S,diacylglyceryl)Cys-, in which Xaa is hydrophobic (preferably Leu), and Yaa (Ala or Ser) and Zaa (Gly or Ala) have small, neutral side chains.. Its pathway is protein modification; lipoprotein biosynthesis (signal peptide cleavage). This protein specifically catalyzes the removal of signal peptides from prolipoproteins. The sequence is that of Lipoprotein signal peptidase from Buchnera aphidicola subsp. Schizaphis graminum (strain Sg).